The following is a 795-amino-acid chain: Phenylalanine--tRNA ligase beta subunit (795 aa).

The 110-residue stretch at 39–148 (AGDFSGVVVG…QNAPVGTNLR (110 aa)) folds into the tRNA-binding domain. Positions 401–476 (PKLNQVSLRR…RIYGYNSIPN (76 aa)) constitute a B5 domain. Positions 454, 460, 463, and 464 each coordinate Mg(2+). An FDX-ACB domain is found at 701–794 (SRFPANRRDL…LKQRFNAYLR (94 aa)).

It belongs to the phenylalanyl-tRNA synthetase beta subunit family. Type 1 subfamily. In terms of assembly, tetramer of two alpha and two beta subunits. Requires Mg(2+) as cofactor.

The protein localises to the cytoplasm. The catalysed reaction is tRNA(Phe) + L-phenylalanine + ATP = L-phenylalanyl-tRNA(Phe) + AMP + diphosphate + H(+). This is Phenylalanine--tRNA ligase beta subunit (pheT) from Pasteurella multocida (strain Pm70).